A 414-amino-acid chain; its full sequence is Enterobactin exporter EntS (414 aa).

Residues 1–21 (MNRQSWLLNLSLLKTHPAFRA) are Cytoplasmic-facing. The helical transmembrane segment at 22 to 42 (VFLARFISIVSLGLLGVAVPV) threads the bilayer. At 43 to 55 (QIQMMTHSTWQVG) the chain is on the periplasmic side. Residues 56–76 (LSVTLTGGAMFIGLMVGGVLA) traverse the membrane as a helical segment. The Cytoplasmic portion of the chain corresponds to 77 to 83 (DRYERKK). A helical transmembrane segment spans residues 84–104 (VILLARGTCGIGFIGLCVNAL). The Periplasmic portion of the chain corresponds to 105–109 (LPEPS). A helical membrane pass occupies residues 110-130 (LLAIYLLGLWDGFFASLGVTA). Residues 131 to 156 (LLAATPALVGRENLMQAGAITMLTVR) are Cytoplasmic-facing. Residues 157–177 (LGSVISPMLGGILLASGGVAW) traverse the membrane as a helical segment. A topological domain (periplasmic) is located at residue Asn-178. A helical transmembrane segment spans residues 179–199 (YGLAAAGTFITLLPLLTLPRL). The Cytoplasmic segment spans residues 200 to 218 (PVPPQPRENPFLALLAAFR). The chain crosses the membrane as a helical span at residues 219 to 239 (FLLACPLIGGIALLGGLVTMA). Residues 240–256 (SAVRVLYPALAMSWQMS) are Periplasmic-facing. The helical transmembrane segment at 257–277 (AAQIGLLYAAIPLGAAIGALT) threads the bilayer. At 278–287 (SGQLAHSVRP) the chain is on the cytoplasmic side. Residues 288 to 307 (GLIMLVSTVGSFLAVGLFAI) traverse the membrane as a helical segment. Over 308–313 (MPVWIA) the chain is Periplasmic. The chain crosses the membrane as a helical span at residues 314-336 (GVICLALFGWLSAISSLLQYTLL). At 337–356 (QTQTPENMLGRMNGLWTAQN) the chain is on the cytoplasmic side. Residues 357-377 (VTGDAIGAALLGGLGAMMTPV) traverse the membrane as a helical segment. Residue Ala-378 is a topological domain, periplasmic. A helical membrane pass occupies residues 379–399 (SASVSGFGLVIIGLLLLLVLG). Topologically, residues 400-414 (ELRRFRQTSPVSDAG) are cytoplasmic.

This sequence belongs to the major facilitator superfamily. EntS (TC 2.A.1.38) family.

It localises to the cell inner membrane. Component of an export pathway for enterobactin. The chain is Enterobactin exporter EntS from Salmonella paratyphi A (strain ATCC 9150 / SARB42).